Reading from the N-terminus, the 350-residue chain is Ookinete surface protein PIMMS43 (350 aa).

The signal sequence occupies residues 1 to 24; sequence MIKLCTFLSLFLIFFFLNLNAING. A helical membrane pass occupies residues 330–350; that stretch reads NSIASKLMSVFVFIAVIIYIL.

In terms of assembly, forms multimers, perhaps with an unknown protein(s).

It is found in the membrane. Its function is as follows. Involved in ookinete evasion of the mosquito complement-like response, oocyst maturation, sporozoite development and infectivity. The chain is Ookinete surface protein PIMMS43 from Plasmodium berghei (strain Anka).